The chain runs to 701 residues: Elongation factor G (701 aa).

One can recognise a tr-type G domain in the interval 11-287; sequence TKVRNIGIMA…AVIDYLPSPL (277 aa). Residues 20–27, 84–88, and 138–141 each bind GTP; these read AHIDAGKT, DTPGH, and NKMD.

Belongs to the TRAFAC class translation factor GTPase superfamily. Classic translation factor GTPase family. EF-G/EF-2 subfamily.

The protein localises to the cytoplasm. In terms of biological role, catalyzes the GTP-dependent ribosomal translocation step during translation elongation. During this step, the ribosome changes from the pre-translocational (PRE) to the post-translocational (POST) state as the newly formed A-site-bound peptidyl-tRNA and P-site-bound deacylated tRNA move to the P and E sites, respectively. Catalyzes the coordinated movement of the two tRNA molecules, the mRNA and conformational changes in the ribosome. The sequence is that of Elongation factor G from Mycobacterium avium (strain 104).